The following is a 446-amino-acid chain: Methylenetetrahydrofolate--tRNA-(uracil-5-)-methyltransferase TrmFO (446 aa).

11-16 lines the FAD pocket; it reads GGGLAG.

It belongs to the MnmG family. TrmFO subfamily. It depends on FAD as a cofactor.

Its subcellular location is the cytoplasm. It catalyses the reaction uridine(54) in tRNA + (6R)-5,10-methylene-5,6,7,8-tetrahydrofolate + NADH + H(+) = 5-methyluridine(54) in tRNA + (6S)-5,6,7,8-tetrahydrofolate + NAD(+). The enzyme catalyses uridine(54) in tRNA + (6R)-5,10-methylene-5,6,7,8-tetrahydrofolate + NADPH + H(+) = 5-methyluridine(54) in tRNA + (6S)-5,6,7,8-tetrahydrofolate + NADP(+). Functionally, catalyzes the folate-dependent formation of 5-methyl-uridine at position 54 (M-5-U54) in all tRNAs. In Oleidesulfovibrio alaskensis (strain ATCC BAA-1058 / DSM 17464 / G20) (Desulfovibrio alaskensis), this protein is Methylenetetrahydrofolate--tRNA-(uracil-5-)-methyltransferase TrmFO.